We begin with the raw amino-acid sequence, 239 residues long: Protein UL24 homolog (239 aa).

The tract at residues 212 to 239 is disordered; it reads TPKLGNSKTSKRKRRNSKKQDFKKLVKN. A compositionally biased stretch (basic and acidic residues) spans 229–239; sequence KKQDFKKLVKN.

It belongs to the herpesviridae UL24 family.

Its subcellular location is the virion. The protein localises to the host cytoplasm. It is found in the host nucleus. It localises to the host nucleolus. The protein resides in the host Golgi apparatus. In terms of biological role, may participate in nuclear egress of viral particles. Plays a role in the dispersal of several host nucleolar proteins including NCL/nucleolin and NPM1. Since deletion of host NCL/nucleolin negatively impact on nuclear egress, UL24 supposedly acts on this process through its effect on host nucleoli. The sequence is that of Protein UL24 homolog (U49) from Homo sapiens (Human).